The chain runs to 243 residues: MELYIITGASKGLGQAIALQALEKGHEVHALSRTKTDVSHKKLTQHQIDLINLEEAEQQFETLLSSIDSDRYSGITLINNAGMVTPIKRAGEASLDELQRHYQLNLTAPVLLSQLFTKRFASYSGKKTVVNITSGAAKNPYKGWSAYCSSKAGLDMFTRTFGFEQEDEELPVNMISFSPGVMDTEMQAVIRSSSKKDFHHIERFRKLNETGSLRSPDFIAGTLLSLLEKGTENGRIYDIKEFL.

Residues Ile-6, Asn-80, Tyr-147, Lys-151, and Thr-184 each coordinate NADP(+). Catalysis depends on Tyr-147, which acts as the Proton acceptor.

The protein belongs to the short-chain dehydrogenases/reductases (SDR) family.

The protein localises to the cytoplasm. The catalysed reaction is (S)-benzoin + NADP(+) = benzil + NADPH + H(+). Its function is as follows. Reduces benzil stereospecifically to (S)-benzoin. The chain is Benzil reductase ((S)-benzoin forming) (yueD) from Bacillus subtilis (strain 168).